The following is a 411-amino-acid chain: Protein translocase subunit SecY (411 aa).

10 helical membrane passes run 13–33, 52–72, 111–131, 135–155, 163–180, 197–217, 252–272, 291–311, 350–370, and 377–397; these read FTLLLLVLARLGIFIPVPGID, IFSGGGFSTIGIFALGIVPYI, ALGWATLQSGAISIWVKPYVF, FTFVCESVLALTAGSMIIMWL, GIGNGASLLIFQNIVSGL, SIKFGLFIVIFLLMIIITIFV, GVMPIVFASASMALPAYLTQL, LYLVLYSVLILFFSYFYTSIV, FLGATFLFTVALIPFIIEKVA, and GLGATSLLILVGVAIDTAKQI.

Belongs to the SecY/SEC61-alpha family. In terms of assembly, component of the plastid Sec protein translocase complex, which is composed of at least SecY, SecE and SecG.

The protein localises to the plastid. It localises to the chloroplast thylakoid membrane. Its function is as follows. The central subunit of the protein translocation channel SecYE. Consists of two halves formed by TMs 1-5 and 6-10. These two domains form a lateral gate at the front which open onto the bilayer between TMs 2 and 7, and are clamped together by SecE at the back. The channel is closed by both a pore ring composed of hydrophobic SecY resides and a short helix (helix 2A) on the extracellular side of the membrane which forms a plug. This chain is Protein translocase subunit SecY, found in Porphyra purpurea (Red seaweed).